We begin with the raw amino-acid sequence, 193 residues long: Dephospho-CoA kinase (193 aa).

Residues 5–193 enclose the DPCK domain; that stretch reads IIGLTGGIAS…KKVERFCETI (189 aa). 13 to 18 lines the ATP pocket; the sequence is ASGKST.

It belongs to the CoaE family.

The protein localises to the cytoplasm. The enzyme catalyses 3'-dephospho-CoA + ATP = ADP + CoA + H(+). Its pathway is cofactor biosynthesis; coenzyme A biosynthesis; CoA from (R)-pantothenate: step 5/5. In terms of biological role, catalyzes the phosphorylation of the 3'-hydroxyl group of dephosphocoenzyme A to form coenzyme A. In Fusobacterium nucleatum subsp. nucleatum (strain ATCC 25586 / DSM 15643 / BCRC 10681 / CIP 101130 / JCM 8532 / KCTC 2640 / LMG 13131 / VPI 4355), this protein is Dephospho-CoA kinase.